The chain runs to 201 residues: Recombination protein RecR (201 aa).

A C4-type zinc finger spans residues 57–72 (CKYCSNFGNKDECDIC). In terms of domain architecture, Toprim spans 80-176 (TKLMIVTTNE…QIYRIGFGIP (97 aa)).

It belongs to the RecR family.

In terms of biological role, may play a role in DNA repair. It seems to be involved in an RecBC-independent recombinational process of DNA repair. It may act with RecF and RecO. The sequence is that of Recombination protein RecR from Ureaplasma urealyticum serovar 10 (strain ATCC 33699 / Western).